Reading from the N-terminus, the 208-residue chain is N-(5'-phosphoribosyl)anthranilate isomerase (208 aa).

The protein belongs to the TrpF family.

It carries out the reaction N-(5-phospho-beta-D-ribosyl)anthranilate = 1-(2-carboxyphenylamino)-1-deoxy-D-ribulose 5-phosphate. Its pathway is amino-acid biosynthesis; L-tryptophan biosynthesis; L-tryptophan from chorismate: step 3/5. This chain is N-(5'-phosphoribosyl)anthranilate isomerase, found in Natronomonas pharaonis (strain ATCC 35678 / DSM 2160 / CIP 103997 / JCM 8858 / NBRC 14720 / NCIMB 2260 / Gabara) (Halobacterium pharaonis).